We begin with the raw amino-acid sequence, 85 residues long: Large ribosomal subunit protein bL27 (85 aa).

Positions 1 to 27 (MAHKKAGGSTKNGRDSQSKRLGVKRYG) are disordered.

This sequence belongs to the bacterial ribosomal protein bL27 family.

The protein is Large ribosomal subunit protein bL27 of Halorhodospira halophila (strain DSM 244 / SL1) (Ectothiorhodospira halophila (strain DSM 244 / SL1)).